The following is a 309-amino-acid chain: Neck protein gp13 (309 aa).

Gp13 and gp14 form a hetero-oligomer complex with a stoichiometry of 10:5.

The protein resides in the virion. In terms of biological role, plays a role in the association of the virion head and tail after packaging of viral DNA within the head. Together with gp14, forms a neck at the portal vertex of the head to be ready for the tail attachment. The protein is Neck protein gp13 (13) of Escherichia coli (Bacteriophage T4).